Reading from the N-terminus, the 178-residue chain is Neuroblastoma suppressor of tumorigenicity 1 (178 aa).

The signal sequence occupies residues 1 to 16; the sequence is MLWVLVGTVLPVMLLA. 5 disulfide bridges follow: cysteine 34/cysteine 84, cysteine 48/cysteine 98, cysteine 58/cysteine 117, cysteine 62/cysteine 119, and cysteine 81/cysteine 122. Residues 34 to 123 form the CTCK domain; sequence CEAKNITQIV…IVHCSCQACG (90 aa). Positions 130–178 are disordered; the sequence is GLNVYMQGEDGPGSQPGSHSHSHPHPGCQTPEPEEPPGAPQVEEEGAED.

It belongs to the DAN family. In terms of assembly, homodimer. As to expression, most abundant in lung, brain, intestine and kidney.

It is found in the secreted. In terms of biological role, possible candidate as a tumor suppressor gene of neuroblastoma. May play an important role in preventing cells from entering the final stage (G1/S) of the transformation process. The chain is Neuroblastoma suppressor of tumorigenicity 1 (Nbl1) from Rattus norvegicus (Rat).